The chain runs to 488 residues: RNA binding exosome specificity factor Mmi1 (488 aa).

Composition is skewed to polar residues over residues 1–14 (MSNT…SSKS), 33–47 (LNES…TTHT), and 54–66 (SVLS…NFSS). 2 disordered regions span residues 1–20 (MSNT…ELPN) and 25–80 (RSLW…DAPI). The segment covering 71–80 (PAPESHDAPI) has biased composition (basic and acidic residues). Residues 95 to 122 (GKYDFSRHCTDYGHSYEWPYFRSLRRES) are interaction with erh1. Disordered regions lie at residues 163 to 185 (SRLH…RRLA) and 225 to 261 (SYPV…TRAS). A Phosphothreonine modification is found at threonine 176. Serine 178, serine 230, serine 231, serine 261, serine 263, and serine 265 each carry phosphoserine. Residues 289-299 (SYLLSNSSNDS) show a composition bias toward low complexity. A disordered region spans residues 289–328 (SYLLSNSSNDSASRKEKPKARASTPPPLNFSRASEHRNEK). Serine 311 bears the Phosphoserine mark. A Phosphothreonine modification is found at threonine 312. Positions 350–476 (SRYFIMLCDN…DEGSRLCTLI (127 aa)) constitute a YTH domain.

Component of the erh1-mmi1 complex composed of mmi1 and erh1. Interacts (via N-terminus) with erh1 in a 2:2 stoichiometry. Interacts with rrp6.

The protein resides in the nucleus. Its function is as follows. RNA-binding protein that recognizes and binds N6-methyladenosine (m6A)-containing RNAs, a modification present at internal sites of mRNAs and some non-coding RNAs. Functions alone and as part of the erh1-mmi1 complex, to recruit the CCR4-NOT complex and the NURS complex to target RNAs. Suppresses the meiotic program during vegetative growth and promotes the meiotic program during mating. Binds to DSR (determinant of selective removal) regions in meiotic mRNA, and recruits the NURS complex to targets. Recruitment of NURS complex to target mRNAs promotes mRNA decay by engagement of the nuclear exosome, and formation of heterochromatin islands at meiotic genes silenced by the exosome. Recruitment of the CCR4-NOT complex to target RNAs promotes heterochromatin formation at RNAi-dependent heterochromatin domains (HOODs), including a subset of meiotic genes, lncRNAs and retrotransposons. Recruitment of the CCR4-NOT complex to rDNA promotes rDNA heterochromatin assembly. Promotes non-canonical transcription termination at meiotic genes and prevents lncRNA transcription from invading and repressing adjacent genes. In Schizosaccharomyces pombe (strain 972 / ATCC 24843) (Fission yeast), this protein is RNA binding exosome specificity factor Mmi1 (mmi1).